The chain runs to 158 residues: Pathogenesis-related protein 1 (158 aa).

The protein belongs to the BetVI family.

The protein resides in the cytoplasm. This Asparagus officinalis (Garden asparagus) protein is Pathogenesis-related protein 1 (PR1).